The primary structure comprises 429 residues: UDP-N-acetylglucosamine 1-carboxyvinyltransferase (429 aa).

22–23 contacts phosphoenolpyruvate; it reads KN. Arginine 102 provides a ligand contact to UDP-N-acetyl-alpha-D-glucosamine. Cysteine 126 serves as the catalytic Proton donor. At cysteine 126 the chain carries 2-(S-cysteinyl)pyruvic acid O-phosphothioketal. UDP-N-acetyl-alpha-D-glucosamine is bound by residues 131–135, aspartate 316, and isoleucine 338; that span reads RPVDL.

The protein belongs to the EPSP synthase family. MurA subfamily.

It is found in the cytoplasm. The catalysed reaction is phosphoenolpyruvate + UDP-N-acetyl-alpha-D-glucosamine = UDP-N-acetyl-3-O-(1-carboxyvinyl)-alpha-D-glucosamine + phosphate. It functions in the pathway cell wall biogenesis; peptidoglycan biosynthesis. In terms of biological role, cell wall formation. Adds enolpyruvyl to UDP-N-acetylglucosamine. This chain is UDP-N-acetylglucosamine 1-carboxyvinyltransferase, found in Methylorubrum populi (strain ATCC BAA-705 / NCIMB 13946 / BJ001) (Methylobacterium populi).